Reading from the N-terminus, the 474-residue chain is Synaptotagmin-17 (474 aa).

Residues Pro54–Leu112 form a disordered region. Residues Ser96–Leu112 are compositionally biased toward low complexity. C2 domains lie at Gln184 to Lys310 and Glu321 to His455.

This sequence belongs to the synaptotagmin family.

The protein resides in the membrane. May play a role in dendrite formation by melanocytes. The protein is Synaptotagmin-17 (syt17) of Xenopus tropicalis (Western clawed frog).